The sequence spans 269 residues: Energy-coupling factor transporter ATP-binding protein EcfA1 (269 aa).

One can recognise an ABC transporter domain in the interval 8-242 (IVFKNVSFQY…AEELTRIGLD (235 aa)). Residue 42–49 (GHNGSGKS) coordinates ATP.

Belongs to the ABC transporter superfamily. Energy-coupling factor EcfA family. Forms a stable energy-coupling factor (ECF) transporter complex composed of 2 membrane-embedded substrate-binding proteins (S component), 2 ATP-binding proteins (A component) and 2 transmembrane proteins (T component).

The protein localises to the cell membrane. In terms of biological role, ATP-binding (A) component of a common energy-coupling factor (ECF) ABC-transporter complex. Unlike classic ABC transporters this ECF transporter provides the energy necessary to transport a number of different substrates. This chain is Energy-coupling factor transporter ATP-binding protein EcfA1, found in Staphylococcus aureus (strain USA300).